The primary structure comprises 226 residues: PKHD-type hydroxylase Abu_0724 (226 aa).

The Fe2OG dioxygenase domain maps to 78 to 178; it reads HIISPFFNKY…RMVSFMWIQS (101 aa). Residues histidine 96, aspartate 98, and histidine 159 each coordinate Fe cation. 2-oxoglutarate is bound at residue arginine 169.

It depends on Fe(2+) as a cofactor. The cofactor is L-ascorbate.

The protein is PKHD-type hydroxylase Abu_0724 of Aliarcobacter butzleri (strain RM4018) (Arcobacter butzleri).